The primary structure comprises 318 residues: Ribonuclease Z (318 aa).

Zn(2+)-binding residues include H63, H65, D67, H68, H142, D213, and H273. The active-site Proton acceptor is D67.

It belongs to the RNase Z family. Homodimer. The cofactor is Zn(2+).

The enzyme catalyses Endonucleolytic cleavage of RNA, removing extra 3' nucleotides from tRNA precursor, generating 3' termini of tRNAs. A 3'-hydroxy group is left at the tRNA terminus and a 5'-phosphoryl group is left at the trailer molecule.. Functionally, zinc phosphodiesterase, which displays some tRNA 3'-processing endonuclease activity. Probably involved in tRNA maturation, by removing a 3'-trailer from precursor tRNA. The protein is Ribonuclease Z of Leuconostoc mesenteroides subsp. mesenteroides (strain ATCC 8293 / DSM 20343 / BCRC 11652 / CCM 1803 / JCM 6124 / NCDO 523 / NBRC 100496 / NCIMB 8023 / NCTC 12954 / NRRL B-1118 / 37Y).